A 643-amino-acid polypeptide reads, in one-letter code: Protein cueball (643 aa).

A signal peptide spans 1–21 (MMIWVPALIFLSACLLPRSNG). The Extracellular segment spans residues 22-530 (TPLEWDFAVT…VCQTPFVWTS (509 aa)). N-linked (GlcNAc...) asparagine glycans are attached at residues N77 and N103. LDL-receptor class B repeat units lie at residues 116–163 (RNLF…DICR), 164–208 (RKLY…DQLS), and 209–254 (DRLF…TNDA). N-linked (GlcNAc...) asparagine glycosylation is present at N172. Over residues 276–290 (ATTTVRPEVESSTDG) the composition is skewed to polar residues. The tract at residues 276-303 (ATTTVRPEVESSTDGTESESKQESEPVE) is disordered. N312 carries an N-linked (GlcNAc...) asparagine glycan. EGF-like domains lie at 363 to 397 (RMDQLERDHCMNGGSYISKRDLCICPAGFKGSRCE), 398 to 429 (IRECHNYCVHGTCQMSDLAYPKCYCQPGFTGE), and 432 to 470 (EVSNCAGLCLNGGHCRLGETEKDQPSCECPANFAGERCE). Intrachain disulfides connect C372–C385, C387–C396, C401–C410, C405–C420, C436–C446, C440–C458, and C460–C469. N-linked (GlcNAc...) asparagine glycosylation is found at N472 and N507. The chain crosses the membrane as a helical span at residues 531–551 (SVIIILVVGIVFSLLLITTII). At 552–643 (HGIRRLYKPK…LIHNMEDDLY (92 aa)) the chain is on the cytoplasmic side.

Belongs to the cueball family.

Its subcellular location is the cell membrane. Its function is as follows. Has a role in spermatogenesis and oogenesis. This is Protein cueball from Drosophila ananassae (Fruit fly).